The chain runs to 194 residues: UPF0301 protein BQ03640 (194 aa).

The protein belongs to the UPF0301 (AlgH) family.

The polypeptide is UPF0301 protein BQ03640 (Bartonella quintana (strain Toulouse) (Rochalimaea quintana)).